Consider the following 78-residue polypeptide: Large ribosomal subunit protein bL28 (78 aa).

The disordered stretch occupies residues 1–20 (MSRVCQVTGKRPVTGNNRSH).

The protein belongs to the bacterial ribosomal protein bL28 family.

The chain is Large ribosomal subunit protein bL28 from Photobacterium profundum (strain SS9).